The chain runs to 171 residues: NRR repressor homolog 2 (171 aa).

Residues 1 to 12 (MEARLSTGEKTK) show a composition bias toward basic and acidic residues. 3 disordered regions span residues 1–45 (MEAR…QQQM), 65–94 (AALP…APWR), and 119–143 (TTKG…EEDK). Residues 26 to 43 (PEEETAAETTTSEEEEQQ) are compositionally biased toward acidic residues.

It belongs to the NPR1-interactor family. As to quaternary structure, interacts with NPR1/NH1. Interacts with NPR3/NH3.

The protein resides in the nucleus. In terms of biological role, binds to and weakly represses NPR1/NH1-mediated transcriptional activation of LG2 in vitro. This chain is NRR repressor homolog 2, found in Oryza sativa subsp. japonica (Rice).